Consider the following 903-residue polypeptide: DNA mismatch repair protein MutS (903 aa).

655–662 (GPNMAGKS) is an ATP binding site.

The protein belongs to the DNA mismatch repair MutS family.

Its function is as follows. This protein is involved in the repair of mismatches in DNA. It is possible that it carries out the mismatch recognition step. This protein has a weak ATPase activity. The protein is DNA mismatch repair protein MutS of Caulobacter vibrioides (strain ATCC 19089 / CIP 103742 / CB 15) (Caulobacter crescentus).